The chain runs to 118 residues: Large ribosomal subunit protein bL20 (118 aa).

Belongs to the bacterial ribosomal protein bL20 family.

Binds directly to 23S ribosomal RNA and is necessary for the in vitro assembly process of the 50S ribosomal subunit. It is not involved in the protein synthesizing functions of that subunit. This chain is Large ribosomal subunit protein bL20, found in Psychrobacter sp. (strain PRwf-1).